Consider the following 245-residue polypeptide: UPF0246 protein LBUL_1917 (245 aa).

Belongs to the UPF0246 family.

This is UPF0246 protein LBUL_1917 from Lactobacillus delbrueckii subsp. bulgaricus (strain ATCC BAA-365 / Lb-18).